A 155-amino-acid polypeptide reads, in one-letter code: Ciliary microtubule inner protein 2C (155 aa).

The protein belongs to the CIMIP2 family.

It is found in the cytoplasm. The protein resides in the cytoskeleton. Its subcellular location is the cilium axoneme. Functionally, microtubule inner protein (MIP) part of the dynein-decorated doublet microtubules (DMTs) in cilia axoneme, which is required for motile cilia beating. This is Ciliary microtubule inner protein 2C (cimip2c) from Xenopus tropicalis (Western clawed frog).